We begin with the raw amino-acid sequence, 47 residues long: uncharacterized protein (47 aa).

This is an uncharacterized protein from Treponema pallidum (strain Nichols).